A 610-amino-acid polypeptide reads, in one-letter code: Preterminal protein (610 aa).

The interval 288–379 is disordered; sequence TLRSGTQTGL…ESFSDDVGLS (92 aa). The short motif at 328–337 is the Nuclear localization signal element; that stretch reads SLPIRRRRRR. Positions 331 to 340 are enriched in basic residues; sequence IRRRRRRGTR. Basic and acidic residues predominate over residues 341 to 350; that stretch reads RQVEREDSVR. The residue at position 549 (Ser-549) is an O-(5'-phospho-DNA)-serine.

The protein belongs to the adenoviridae terminal protein family. In terms of assembly, heterodimer with the polymerase; this heterodimer binds to bp 9 to 18 of the genome. Interacts with host POU2F1; POU2F1 binds to the auxiliary sequences in the inverted terminal repeats and tethers the pTP-POL heterodimer to the origin DNA thereby participating in the assembly of the pre-initiation complex (POL-TP-DBP-NFIA-POU2F1). In terms of processing, preterminal protein is used to replicate viral genome, upon genomic encapsidation it is processed first into iTP and finally into TP by adenovirus protease.

The protein localises to the host nucleus matrix. Protein covalently bound to the viral DNA that acts as a primer for viral genomic replication by DNA strand displacement. Assembles on the viral origin of replication in an initiation complex with viral polymerase, DBP, host NFIA and host POU2F1/OCT1. During initiation, the polymerase covalently couples the first dCTP with Ser-580 of pTP. The terminal protein stimulates the template activity over 20 fold compared to protein-free templates. Neo-synthesized viral genomes are linked to two preterminal proteins, one for each 5' end. These new genomes are encapsidated in the nucleus, and during capsid maturation by viral protease, preterminal protein is first cleaved into intermediary (iTP), then into mature TP. May play a role in host nuclear matrix localization of genomic DNA. This Snake adenovirus serotype 1 (SnAdV-1) protein is Preterminal protein.